Here is a 30-residue protein sequence, read N- to C-terminus: Cyclotide hyen-L (30 aa).

The segment at residues 1–30 (GIPCAESCVYIPCTVTALLGCSCSDKVCYN) is a cross-link (cyclopeptide (Gly-Asn)). Cystine bridges form between C4–C21, C8–C23, and C13–C28.

In terms of processing, this is a cyclic peptide. Detected in stems (at protein level).

Functionally, probably participates in a plant defense mechanism. Has cytotoxic activity against HUVEC cells (LC(50)= 2.26 uM) and various cancer cells including HeLa (LC(50)= 3.48 uM), MCF-7 and K562. Displays very weak hemolytic activity. Binds to and induces leakage in phospholipd membranes, particularly ones containing 1-palmitoyl-2-oleophosphatidylethanolamine (POPE). This Pigea enneasperma (Spade flower) protein is Cyclotide hyen-L.